Here is a 329-residue protein sequence, read N- to C-terminus: Malate dehydrogenase (329 aa).

Residue 12–18 coordinates NAD(+); the sequence is GAAGQIG. Positions 95 and 101 each coordinate substrate. NAD(+) contacts are provided by residues asparagine 108, glutamine 115, and 132-134; that span reads VGN. 2 residues coordinate substrate: asparagine 134 and arginine 165. Histidine 190 serves as the catalytic Proton acceptor.

It belongs to the LDH/MDH superfamily. MDH type 2 family.

The catalysed reaction is (S)-malate + NAD(+) = oxaloacetate + NADH + H(+). Functionally, catalyzes the reversible oxidation of malate to oxaloacetate. The protein is Malate dehydrogenase of Polynucleobacter asymbioticus (strain DSM 18221 / CIP 109841 / QLW-P1DMWA-1) (Polynucleobacter necessarius subsp. asymbioticus).